Here is a 282-residue protein sequence, read N- to C-terminus: MAGPPNKKQKREDYRTARENGEESKELPKKKFYRQRAHANPFSDHRLAYPASPAQMDWASHYPAYAESAAASEGTEEPSTGSDSSSLKKLKQDVEVADIGCGFGGLTVALAPKLPNSLILGMEIRAQVTEYVQERIKALRVQEKESGLFQNASCIRANTMKFMPNFFKKHQLSKIFLCFPDPHFKARKHKARIVSTTLAAEYAYVVRPGGIIYTITDVEDLHNWMVTHFNAHPTFERVAEEEQEADECVNIMRTETEEGKKVTRNNGPKFVALFKRLEDPPW.

Residues 1–36 (MAGPPNKKQKREDYRTARENGEESKELPKKKFYRQR) form a disordered region. Residues 10–29 (KREDYRTARENGEESKELPK) show a composition bias toward basic and acidic residues. Residues glycine 100, 123-124 (EI), 158-159 (NT), and cysteine 178 contribute to the S-adenosyl-L-methionine site. Residue aspartate 181 is part of the active site. 256–258 (TEE) is an S-adenosyl-L-methionine binding site.

This sequence belongs to the class I-like SAM-binding methyltransferase superfamily. TrmB family. Forms a complex with trm82.

The protein resides in the nucleus. The catalysed reaction is guanosine(46) in tRNA + S-adenosyl-L-methionine = N(7)-methylguanosine(46) in tRNA + S-adenosyl-L-homocysteine. It functions in the pathway tRNA modification; N(7)-methylguanine-tRNA biosynthesis. Catalyzes the formation of N(7)-methylguanine at position 46 (m7G46) in tRNA. In Botryotinia fuckeliana (strain B05.10) (Noble rot fungus), this protein is tRNA (guanine-N(7)-)-methyltransferase (trm8).